The following is a 159-amino-acid chain: ATP synthase subunit b (159 aa).

Residues 2–22 (NISIPQIIAAILNFIILLLIV) traverse the membrane as a helical segment.

The protein belongs to the ATPase B chain family. As to quaternary structure, F-type ATPases have 2 components, F(1) - the catalytic core - and F(0) - the membrane proton channel. F(1) has five subunits: alpha(3), beta(3), gamma(1), delta(1), epsilon(1). F(0) has three main subunits: a(1), b(2) and c(10-14). The alpha and beta chains form an alternating ring which encloses part of the gamma chain. F(1) is attached to F(0) by a central stalk formed by the gamma and epsilon chains, while a peripheral stalk is formed by the delta and b chains.

The protein resides in the cell membrane. Its function is as follows. F(1)F(0) ATP synthase produces ATP from ADP in the presence of a proton or sodium gradient. F-type ATPases consist of two structural domains, F(1) containing the extramembraneous catalytic core and F(0) containing the membrane proton channel, linked together by a central stalk and a peripheral stalk. During catalysis, ATP synthesis in the catalytic domain of F(1) is coupled via a rotary mechanism of the central stalk subunits to proton translocation. Component of the F(0) channel, it forms part of the peripheral stalk, linking F(1) to F(0). This chain is ATP synthase subunit b, found in Clostridium botulinum (strain Loch Maree / Type A3).